Consider the following 625-residue polypeptide: Vacuolar-sorting receptor 7 (625 aa).

The signal sequence occupies residues 1-26; it reads MGLVNGRASLTFLLAALTIIAMVVEA. Residues 27 to 564 are Lumenal-facing; sequence RFVVEKESIS…CIERYGSKTA (538 aa). The PA domain occupies 58-166; sequence DYGGFLIGSV…SFGDDLRQGF (109 aa). N-linked (GlcNAc...) asparagine glycosylation is found at N292, N400, and N432. 2 consecutive EGF-like domains span residues 414–464 and 467–513; these read ETNE…TSCT and GPAR…LTCE. Disulfide bonds link C418–C436, C425–C445, C447–C463, C471–C491, C478–C499, C501–C512, and C542–C555. The region spanning 514 to 556 is the EGF-like 3; calcium-binding domain; the sequence is DINECKERSVCQCSGCRCKNSWGGYKCSCSGDRLYINDQDTCI. The helical transmembrane segment at 565–585 threads the bilayer; that stretch reads WWLTFLILAIVAVAGLAGYIF. The Cytoplasmic segment spans residues 586 to 625; that stretch reads YKYRFRSYMDSEIMTIMSQYMPLESQRAREVPSEAEPFTL. Residues 605-608 carry the Tyrosine-based internalization motif motif; sequence YMPL.

It belongs to the VSR (BP-80) family. Expressed at low levels in seedlings, roots, young leaves, flowers and siliques.

It localises to the golgi apparatus membrane. Vacuolar-sorting receptor (VSR) involved in clathrin-coated vesicles sorting from Golgi apparatus to vacuoles. This is Vacuolar-sorting receptor 7 (VSR7) from Arabidopsis thaliana (Mouse-ear cress).